Reading from the N-terminus, the 565-residue chain is Periplasmic trehalase (565 aa).

The signal sequence occupies residues 1–30 (MKSPAPSRPQKMALIPACIFLCFAALSVQA). Substrate contacts are provided by residues arginine 152, 159–160 (WD), asparagine 196, 205–207 (RSQ), 277–279 (RPE), and glycine 310. Residues aspartate 312 and glutamate 496 each act as proton donor/acceptor in the active site. A substrate-binding site is contributed by glutamate 511. A disordered region spans residues 538–565 (PCDNVPATRPTVKSATTQPSTKEAQPTP). Over residues 548-565 (TVKSATTQPSTKEAQPTP) the composition is skewed to polar residues.

It belongs to the glycosyl hydrolase 37 family. In terms of assembly, monomer.

Its subcellular location is the periplasm. The enzyme catalyses alpha,alpha-trehalose + H2O = alpha-D-glucose + beta-D-glucose. In terms of biological role, provides the cells with the ability to utilize trehalose at high osmolarity by splitting it into glucose molecules that can subsequently be taken up by the phosphotransferase-mediated uptake system. The chain is Periplasmic trehalase from Escherichia coli (strain K12 / MC4100 / BW2952).